A 162-amino-acid polypeptide reads, in one-letter code: Ribonuclease (162 aa).

The signal sequence occupies residues Met-1–Ala-29. The propeptide occupies Glu-30–Leu-53. Residue Glu-125 is the Proton acceptor of the active site. His-154 (proton donor) is an active-site residue.

Belongs to the ribonuclease N1/T1 family.

It localises to the secreted. This is a purine-specific ribonuclease. The protein is Ribonuclease of Bacillus intermedius.